The sequence spans 176 residues: MLAESVLGNLKEGGSSKELDFIDLEWFDAQKRMGRFTSQKGAELVLKLKNPPKMGLCDGDILFEDATSLIAINIIPTPTLHVYADSTAQVARLCYEVGNRHASLYYGDSPLSFKTPFERPLQVLFDKLALRYEVLKSKLDASQRISVSAPHADPLQEGSAPLKFKSALDLQIVIKK.

The protein belongs to the UreE family.

The protein localises to the cytoplasm. Involved in urease metallocenter assembly. Binds nickel. Probably functions as a nickel donor during metallocenter assembly. In Helicobacter bizzozeronii, this protein is Urease accessory protein UreE.